We begin with the raw amino-acid sequence, 157 residues long: Class I hydrophobin rodA (157 aa).

The N-terminal stretch at 1 to 41 (MKFSIAAAVVAFAASVAALPPAHDSQFAGNGVGNKGNSNVK) is a signal peptide. A glycan (N-linked (GlcNAc...) asparagine) is linked at Asn47. 4 disulfides stabilise this stretch: Cys57/Cys131, Cys65/Cys125, Cys66/Cys106, and Cys132/Cys150.

This sequence belongs to the fungal hydrophobin family. In terms of assembly, self-assembles to form functional amyloid fibrils called rodlets. Self-assembly into fibrillar rodlets occurs spontaneously at hydrophobic:hydrophilic interfaces and the rodlets further associate laterally to form amphipathic monolayers.

It is found in the secreted. It localises to the spore wall. Functionally, aerial growth, conidiation, and dispersal of filamentous fungi in the environment rely upon a capability of their secreting small amphipathic proteins called hydrophobins (HPBs) with low sequence identity. Class I can self-assemble into an outermost layer of rodlet bundles on aerial cell surfaces, conferring cellular hydrophobicity that supports fungal growth, development and dispersal; whereas Class II form highly ordered films at water-air interfaces through intermolecular interactions but contribute nothing to the rodlet structure. RodA is a class I hydrophobin that contributes to surface hydrophobicity, which is important for processes such as association of hyphae in reproductive structures, dispersal of aerial spores and adhesion of pathogens to host structures. Important for the formation of hydrophobic rodlet layers of asexually-produced spores. Promotes also biofilm formation and may enhance lignocellulose utilization via promoting a compact substrate-enzyme-fungus structure. The protein is Class I hydrophobin rodA of Emericella nidulans (strain FGSC A4 / ATCC 38163 / CBS 112.46 / NRRL 194 / M139) (Aspergillus nidulans).